A 175-amino-acid polypeptide reads, in one-letter code: Cuticle protein CP1876 (175 aa).

As to expression, calcified shell.

This chain is Cuticle protein CP1876, found in Cancer pagurus (Rock crab).